Here is a 64-residue protein sequence, read N- to C-terminus: DNA gyrase inhibitor YacG (64 aa).

Zn(2+)-binding residues include C9, C12, C28, and C32. The interval K45–K64 is disordered. Over residues S54–K64 the composition is skewed to acidic residues.

This sequence belongs to the DNA gyrase inhibitor YacG family. Interacts with GyrB. Zn(2+) serves as cofactor.

In terms of biological role, inhibits all the catalytic activities of DNA gyrase by preventing its interaction with DNA. Acts by binding directly to the C-terminal domain of GyrB, which probably disrupts DNA binding by the gyrase. This Escherichia fergusonii (strain ATCC 35469 / DSM 13698 / CCUG 18766 / IAM 14443 / JCM 21226 / LMG 7866 / NBRC 102419 / NCTC 12128 / CDC 0568-73) protein is DNA gyrase inhibitor YacG.